We begin with the raw amino-acid sequence, 408 residues long: Serine-rich antigen (408 aa).

2 repeat units span residues 209 to 214 and 230 to 235. The 2 X 6 AA repeats of S-V-A-Q-S-E stretch occupies residues 209–235; the sequence is SVAQSEEHGSDSMSQSYNTCGSVAQSE.

This sequence belongs to the mycobacterial PPE family.

The protein is Serine-rich antigen (sra) of Mycobacterium leprae (strain TN).